The sequence spans 625 residues: RalA-binding protein 1 (625 aa).

Composition is skewed to basic and acidic residues over residues 1–11 (MDFDSPEEKEF) and 20–60 (ADAK…KDRG). Residues 1–172 (MDFDSPEEKE…SKQLSQQQDD (172 aa)) form a disordered region. A phosphoserine mark is found at Ser-68 and Ser-69. Residues 94–157 (KSKEKREKSR…EKDKKADKKD (64 aa)) show a composition bias toward basic and acidic residues. The Rho-GAP domain occupies 191 to 385 (VSLATERSRC…PLTSTSPKLP (195 aa)). Residues 443–500 (QEKTAEEVDNSSSAPPAVASEDTTDSKPAGTPAVSTNNSISQEEPKTDTLTPKDAPND) are disordered. The segment covering 475-484 (AVSTNNSISQ) has biased composition (polar residues).

As to quaternary structure, interacts with CycB and numb.

In terms of biological role, participates in receptor endocytosis during interphase, is also involved in mitotic processes when endocytosis is switched off. The chain is RalA-binding protein 1 from Drosophila melanogaster (Fruit fly).